The chain runs to 183 residues: Putative manganese efflux pump MntP 1 (183 aa).

6 helical membrane passes run 6–26 (LFLL…CIGI), 36–56 (IIFV…GGYI), 64–84 (IVPI…ILMI), 100–120 (IMYL…GFTT), 130–150 (LFMS…LGII), and 158–178 (ISII…LFGL).

Belongs to the MntP (TC 9.B.29) family.

It is found in the cell membrane. Probably functions as a manganese efflux pump. This Clostridium botulinum (strain Langeland / NCTC 10281 / Type F) protein is Putative manganese efflux pump MntP 1.